Reading from the N-terminus, the 756-residue chain is Inhibitor of nuclear factor kappa-B kinase subunit beta (756 aa).

One can recognise a Protein kinase domain in the interval 15–300; the sequence is WEMKERLGTG…DPVYGPNGCF (286 aa). ATP is bound by residues 21 to 29 and Lys44; that span reads LGTGGFGNV. Catalysis depends on Asp145, which acts as the Proton acceptor. Lys163 participates in a covalent cross-link: Glycyl lysine isopeptide (Lys-Gly) (interchain with G-Cter in ubiquitin). Ser177 carries the post-translational modification Phosphoserine; by TBK1 and PKC/PRKCZ. At Cys179 the chain carries S-nitrosocysteine. The residue at position 181 (Ser181) is a Phosphoserine; by TBK1, PKC/PRKCZ and PDPK1. Residue Pro191 is modified to Hydroxyproline. The tract at residues 458 to 479 is leucine-zipper; that stretch reads LLRNNSCLSKMKNSMASMSQQL. A phosphoserine; by autocatalysis mark is found at Ser670, Ser672, Ser675, Ser682, Ser689, Ser697, Ser705, Ser733, and Ser740. An NEMO-binding region spans residues 737–742; that stretch reads LDWSWL.

The protein belongs to the protein kinase superfamily. Ser/Thr protein kinase family. I-kappa-B kinase subfamily. Component of the I-kappa-B-kinase (IKK) core complex consisting of CHUK, IKBKB and IKBKG; probably four alpha/CHUK-beta/IKBKB dimers are associated with four gamma/IKBKG subunits. The IKK core complex seems to associate with regulatory or adapter proteins to form a IKK-signalosome holo-complex. The IKK complex associates with TERF2IP/RAP1, leading to promote IKK-mediated phosphorylation of RELA/p65. Part of a complex composed of NCOA2, NCOA3, CHUK/IKKA, IKBKB, IKBKG and CREBBP. Part of a 70-90 kDa complex at least consisting of CHUK/IKKA, IKBKB, NFKBIA, RELA, ELP1 and MAP3K14. Found in a membrane raft complex, at least composed of BCL10, CARD11, DPP4 and IKBKB. Interacts with SQSTM1 through PRKCZ or PRKCI. Forms an NGF-induced complex with IKBKB, PRKCI and TRAF6. May interact with MAVS/IPS1. Interacts with NALP2. Interacts with TICAM1. Interacts with FAF1; the interaction disrupts the IKK complex formation. Interacts with ATM. Part of a ternary complex consisting of TANK, IKBKB and IKBKG. Interacts with NIBP; the interaction is direct. Interacts with ARRB1 and ARRB2. Interacts with TRIM21. Interacts with NLRC5; prevents IKBKB phosphorylation and kinase activity. Interacts with PDPK1. Interacts with EIF2AK2/PKR. The phosphorylated form interacts with PPM1A and PPM1B. Interacts with ZNF268; the interaction is further increased in a TNF-alpha-dependent manner. Interacts with IKBKE. Interacts with ZC3H12A. Interacts with AKAP13. Interacts with IFIT5; the interaction synergizes the recruitment of IKK to MAP3K7 and enhances IKK phosphorylation. Interacts with LRRC14; disrupts IKBKB-IKBKG interaction preventing I-kappa-B-kinase (IKK) core complex formation and leading to a decrease of IKBKB phosphorylation and NF-kappaB activation. Interacts with SASH1. Interacts with ARFIP2. Interacts with FKBP5. Upon cytokine stimulation, phosphorylated on Ser-177 and Ser-181 by MEKK1 and/or MAP3K14/NIK as well as TBK1 and PRKCZ; which enhances activity. Phosphorylated by MAP3K7/TAK1 in response to NOD1 and NOD2 signaling, promoting activation and phosphorylation of NF-kappa-B inhibitors, leading to NF-kappa-B activation. Once activated, autophosphorylates on the C-terminal serine cluster; which decreases activity and prevents prolonged activation of the inflammatory response. Phosphorylated by the IKK-related kinases TBK1 and IKBKE, which is associated with reduced CHUK/IKKA and IKBKB activity and NF-kappa-B-dependent gene transcription. Dephosphorylated at Ser-177 and Ser-181 by PPM1A and PPM1B. Post-translationally, ubiquitinated. Monoubiquitination involves TRIM21 that leads to inhibition of Tax-induced NF-kappa-B signaling. 'Ser-163' may not serve as a monoubiquitination site. Ubiquitination on 'Ser-163' may modulate phosphorylation on C-terminal serine residues. In terms of processing, hydroxylated by PHD1/EGLN2, loss of hydroxylation under hypoxic conditions results in activation of NF-kappa-B.

The protein resides in the cytoplasm. It is found in the nucleus. The protein localises to the membrane raft. It carries out the reaction L-seryl-[I-kappa-B protein] + ATP = O-phospho-L-seryl-[I-kappa-B protein] + ADP + H(+). It catalyses the reaction L-seryl-[protein] + ATP = O-phospho-L-seryl-[protein] + ADP + H(+). The enzyme catalyses L-threonyl-[protein] + ATP = O-phospho-L-threonyl-[protein] + ADP + H(+). Serine kinase that plays an essential role in the NF-kappa-B signaling pathway which is activated by multiple stimuli such as inflammatory cytokines, bacterial or viral products, DNA damages or other cellular stresses. Acts as a part of the canonical IKK complex in the conventional pathway of NF-kappa-B activation. Phosphorylates inhibitors of NF-kappa-B on 2 critical serine residues. These modifications allow polyubiquitination of the inhibitors and subsequent degradation by the proteasome. In turn, free NF-kappa-B is translocated into the nucleus and activates the transcription of hundreds of genes involved in immune response, growth control, or protection against apoptosis. In addition to the NF-kappa-B inhibitors, phosphorylates several other components of the signaling pathway including NEMO/IKBKG, NF-kappa-B subunits RELA and NFKB1, as well as IKK-related kinases TBK1 and IKBKE. IKK-related kinase phosphorylations may prevent the overproduction of inflammatory mediators since they exert a negative regulation on canonical IKKs. Phosphorylates FOXO3, mediating the TNF-dependent inactivation of this pro-apoptotic transcription factor. Also phosphorylates other substrates including NAA10, NCOA3, BCL10 and IRS1. Phosphorylates RIPK1 at 'Ser-25' which represses its kinase activity and consequently prevents TNF-mediated RIPK1-dependent cell death. Phosphorylates the C-terminus of IRF5, stimulating IRF5 homodimerization and translocation into the nucleus. The polypeptide is Inhibitor of nuclear factor kappa-B kinase subunit beta (IKBKB) (Bos taurus (Bovine)).